The sequence spans 568 residues: Sulfite reductase [NADPH] hemoprotein beta-component (568 aa).

Residues Cys426, Cys432, Cys471, and Cys475 each contribute to the [4Fe-4S] cluster site. A siroheme-binding site is contributed by Cys475.

Belongs to the nitrite and sulfite reductase 4Fe-4S domain family. Alpha(8)-beta(8). The alpha component is a flavoprotein, the beta component is a hemoprotein. Requires siroheme as cofactor. [4Fe-4S] cluster serves as cofactor.

The catalysed reaction is hydrogen sulfide + 3 NADP(+) + 3 H2O = sulfite + 3 NADPH + 4 H(+). Its pathway is sulfur metabolism; hydrogen sulfide biosynthesis; hydrogen sulfide from sulfite (NADPH route): step 1/1. Functionally, component of the sulfite reductase complex that catalyzes the 6-electron reduction of sulfite to sulfide. This is one of several activities required for the biosynthesis of L-cysteine from sulfate. This chain is Sulfite reductase [NADPH] hemoprotein beta-component, found in Xylella fastidiosa (strain M23).